A 387-amino-acid chain; its full sequence is MEQVVIVDAIRTPMGRSKGGAFRNVRAEDLSAHLMRSLLARNPALEAAALDDIYWGCVQQTLEQGFNIARNAALLAEVPHSVPAVTVNRLCGSSMQALHDAARMIMTGDAQACLVGGVEHMGHVPMSHGVDFHPGLSRNVAKAAGMMGLTTEMLARMHGISREMQDAFAARSHARAWAATQSGAFKNEIIPTGGHDADGVLKQFNYDEVIRPETTVEALATLRPAFDPVSGTVTAGTSSALSDGAAAMLVMSESRARELGLKPRARVRSMAVVGCDPSIMGYGPVPASKLALKKAGLSASDIGVFEMNEAFAAQILPCIKDLGLMEQIDEKINLNGGAIALGHPLGCSGARISTTLLNLMEHKDVQFGLATMCIGLGQGIATVFERV.

Cys91 serves as the catalytic Acyl-thioester intermediate. Residues His343 and Cys373 each act as proton acceptor in the active site.

This sequence belongs to the thiolase-like superfamily. Thiolase family. As to quaternary structure, heterotetramer of two alpha chains (FadB) and two beta chains (FadA).

Its subcellular location is the cytoplasm. It carries out the reaction an acyl-CoA + acetyl-CoA = a 3-oxoacyl-CoA + CoA. The protein operates within lipid metabolism; fatty acid beta-oxidation. In terms of biological role, catalyzes the final step of fatty acid oxidation in which acetyl-CoA is released and the CoA ester of a fatty acid two carbons shorter is formed. This Escherichia coli (strain UTI89 / UPEC) protein is 3-ketoacyl-CoA thiolase.